A 241-amino-acid chain; its full sequence is Carboxy-S-adenosyl-L-methionine synthase (241 aa).

Residues Y38, 63–65 (GCS), 88–89 (DN), 116–117 (DI), N131, and R198 contribute to the S-adenosyl-L-methionine site.

It belongs to the class I-like SAM-binding methyltransferase superfamily. Cx-SAM synthase family. As to quaternary structure, homodimer.

The catalysed reaction is prephenate + S-adenosyl-L-methionine = carboxy-S-adenosyl-L-methionine + 3-phenylpyruvate + H2O. Functionally, catalyzes the conversion of S-adenosyl-L-methionine (SAM) to carboxy-S-adenosyl-L-methionine (Cx-SAM). The polypeptide is Carboxy-S-adenosyl-L-methionine synthase (Actinobacillus pleuropneumoniae serotype 7 (strain AP76)).